The chain runs to 393 residues: Putative F-box/kelch-repeat protein At1g32430 (393 aa).

The F-box domain maps to 1–47 (MANKEKLPWDLEEEILSRVPPTSLDRFKTVCKRWNALFNDKTFINNH). 2 Kelch repeats span residues 151 to 199 (YMKD…NLSV) and 308 to 357 (WIYV…QVQF).

The polypeptide is Putative F-box/kelch-repeat protein At1g32430 (Arabidopsis thaliana (Mouse-ear cress)).